Consider the following 423-residue polypeptide: Protein CLP1 homolog (423 aa).

Residues glutamate 19, lysine 60, and 122 to 127 (DVGKTT) each bind ATP.

This sequence belongs to the Clp1 family. Clp1 subfamily.

The protein resides in the nucleus. Its function is as follows. Required for endonucleolytic cleavage during polyadenylation-dependent pre-mRNA 3'-end formation. The protein is Protein CLP1 homolog (cbc) of Culex quinquefasciatus (Southern house mosquito).